Reading from the N-terminus, the 336-residue chain is Aspartate--ammonia ligase (336 aa).

The protein belongs to the class-II aminoacyl-tRNA synthetase family. AsnA subfamily.

The protein resides in the cytoplasm. The catalysed reaction is L-aspartate + NH4(+) + ATP = L-asparagine + AMP + diphosphate + H(+). It functions in the pathway amino-acid biosynthesis; L-asparagine biosynthesis; L-asparagine from L-aspartate (ammonia route): step 1/1. The polypeptide is Aspartate--ammonia ligase (Lactobacillus johnsonii (strain CNCM I-12250 / La1 / NCC 533)).